The chain runs to 150 residues: 3-hydroxyacyl-[acyl-carrier-protein] dehydratase FabZ (150 aa).

Residue His-51 is part of the active site.

The protein belongs to the thioester dehydratase family. FabZ subfamily.

Its subcellular location is the cytoplasm. The enzyme catalyses a (3R)-hydroxyacyl-[ACP] = a (2E)-enoyl-[ACP] + H2O. Functionally, involved in unsaturated fatty acids biosynthesis. Catalyzes the dehydration of short chain beta-hydroxyacyl-ACPs and long chain saturated and unsaturated beta-hydroxyacyl-ACPs. This chain is 3-hydroxyacyl-[acyl-carrier-protein] dehydratase FabZ, found in Legionella pneumophila subsp. pneumophila (strain Philadelphia 1 / ATCC 33152 / DSM 7513).